Consider the following 240-residue polypeptide: Short palate, lung and nasal epithelium carcinoma-associated protein 2B (240 aa).

Positions 1–19 (MVQLWKLVLLCGLLAGTSA) are cleaved as a signal peptide. Cysteines 163 and 206 form a disulfide.

The protein belongs to the BPI/LBP/Plunc superfamily. Plunc family. As to expression, parotid glands.

The protein localises to the secreted. This is Short palate, lung and nasal epithelium carcinoma-associated protein 2B (SPLUNC2B) from Bos taurus (Bovine).